A 974-amino-acid chain; its full sequence is Villin-4 (974 aa).

6 Gelsolin-like repeats span residues 29–79 (FIPT…DEAG), 150–190 (VHVK…QERA), 262–305 (GQAN…DDRK), 394–451 (LQVW…EERG), 532–572 (MQAI…TDQE), and 634–675 (LKVT…KNKL). Positions 738-783 (VKNGGTPVADKPKRRTPASYGGRASVPDKSQQRSRSMSFSPDRVRV) are disordered. A phosphoserine mark is found at Ser-777 and Ser-787. 2 disordered regions span residues 801-833 (NARNLSTPPPVVRKLYPRSVTPDSSKFAPAPKS) and 845-930 (KIPP…PVSD). Residues 824-833 (SSKFAPAPKS) are compositionally biased toward low complexity. A compositionally biased stretch (basic and acidic residues) spans 872–887 (NSKEQEEKKENDKEEG). Residues 888–898 (SMSSRIESLTI) show a composition bias toward polar residues. Ser-890 carries the post-translational modification Phosphoserine. Positions 909 to 974 (EEDLPAHPYD…NKFKMAVQLF (66 aa)) constitute an HP domain. Basic and acidic residues predominate over residues 912–921 (LPAHPYDRLK).

Belongs to the villin/gelsolin family. In terms of tissue distribution, preferentially expressed in vegetative tissues. Detected in the whole seedling, hypocotyl, cotyledon, primary root, roots hair cells and trichomes. Expressed in flowers but not in the silique.

It is found in the cytoplasm. The protein resides in the cytoskeleton. In terms of biological role, binds actin and actin filament bundles in a Ca(2+)-insensitive manner, but caps the barbed end of actin filaments and is able to sever them in a calcium-dependent manner. Involved in root hair growth through regulating actin organization in a Ca(2+)-dependent manner. The chain is Villin-4 from Arabidopsis thaliana (Mouse-ear cress).